Here is a 453-residue protein sequence, read N- to C-terminus: tRNA modification GTPase MnmE (453 aa).

(6S)-5-formyl-5,6,7,8-tetrahydrofolate contacts are provided by arginine 22, glutamate 79, and lysine 119. The TrmE-type G domain occupies 215–376; that stretch reads GMKVVIAGRP…LRNHLKECMG (162 aa). Position 225 (asparagine 225) interacts with K(+). GTP contacts are provided by residues 225 to 230, 244 to 250, 269 to 272, and 334 to 337; these read NAGKSS, TDIAGTT, DTAG, and NKAD. Mg(2+) is bound at residue serine 229. Residues threonine 244, isoleucine 246, and threonine 249 each contribute to the K(+) site. Threonine 250 contributes to the Mg(2+) binding site. Residue lysine 453 coordinates (6S)-5-formyl-5,6,7,8-tetrahydrofolate.

It belongs to the TRAFAC class TrmE-Era-EngA-EngB-Septin-like GTPase superfamily. TrmE GTPase family. In terms of assembly, homodimer. Heterotetramer of two MnmE and two MnmG subunits. The cofactor is K(+).

Its subcellular location is the cytoplasm. Its function is as follows. Exhibits a very high intrinsic GTPase hydrolysis rate. Involved in the addition of a carboxymethylaminomethyl (cmnm) group at the wobble position (U34) of certain tRNAs, forming tRNA-cmnm(5)s(2)U34. In Vibrio vulnificus (strain CMCP6), this protein is tRNA modification GTPase MnmE.